Consider the following 215-residue polypeptide: Adenylate kinase (215 aa).

10-15 (GAGKGT) serves as a coordination point for ATP. Positions 30–59 (STGDMFRKAIKEETELGKEAKSYMDRGELV) are NMP. AMP contacts are provided by residues threonine 31, arginine 36, 57 to 59 (ELV), 85 to 88 (GFPR), and glutamine 92. The LID stretch occupies residues 126–163 (GRRICESCGTTYHLVFNPPKVEGICDIDGGKLYQREDD). Arginine 127 is an ATP binding site. The Zn(2+) site is built by cysteine 130 and cysteine 133. An ATP-binding site is contributed by 136-137 (TY). Zn(2+)-binding residues include cysteine 150 and aspartate 153. Residues arginine 160 and arginine 171 each coordinate AMP. Lysine 199 provides a ligand contact to ATP.

It belongs to the adenylate kinase family. Monomer.

The protein localises to the cytoplasm. It carries out the reaction AMP + ATP = 2 ADP. It participates in purine metabolism; AMP biosynthesis via salvage pathway; AMP from ADP: step 1/1. Functionally, catalyzes the reversible transfer of the terminal phosphate group between ATP and AMP. Plays an important role in cellular energy homeostasis and in adenine nucleotide metabolism. This Staphylococcus aureus (strain COL) protein is Adenylate kinase.